Consider the following 449-residue polypeptide: MLKPPVDAPIDVKDWIDNRPIAAYQWLILVLCFLIVLFDGFDVAVMGFIAPSLMQDWGLSRAAFGPVMSAGMVGLAIGALTAGPYADRLGRKKVLLIAVSGFSLLSLACAFARNPYELAVLRLLTGIALGAAMPNCTTLLAEYLPTRNRSLMITIMFTGFNMGSGLGGFLSAWLIPHHGWKSVLLAGGLLPLALLPLLWWLLPESARFLAARQAPASQIAAALAKLGGRFAAGTRFTVSEPTTQHKAPARQLFSERYRFGTLALWLTYFMGLLVIYLTMGWLPTLLRDGGLSIERAATITGLFQIGGAVGAIVVGWIMDRRNPNRVIAIAYALGGLCIVSLGALSLESSLLVVGVAAAGFCMSGAQTALNAFAPGYYPTEFRATGVSWMLGIGRFGAIFGSLIGGAVLSLGLGLPLLFTLLGLPAFAAALAILANGHARLRATPAVTAP.

Transmembrane regions (helical) follow at residues 26–46, 62–82, 92–112, 123–143, 155–175, 183–203, 262–282, 298–318, 326–346, 349–369, 388–408, and 414–434; these read WLILVLCFLIVLFDGFDVAVM, AAFGPVMSAGMVGLAIGALTA, KKVLLIAVSGFSLLSLACAFA, LLTGIALGAAMPNCTTLLAEY, IMFTGFNMGSGLGGFLSAWLI, VLLAGGLLPLALLPLLWWLLP, LALWLTYFMGLLVIYLTMGWL, TITGLFQIGGAVGAIVVGWIM, VIAIAYALGGLCIVSLGALSL, SLLVVGVAAAGFCMSGAQTAL, WMLGIGRFGAIFGSLIGGAVL, and LPLLFTLLGLPAFAAALAILA.

Belongs to the major facilitator superfamily. Sugar transporter (TC 2.A.1.1) family.

It localises to the membrane. Functionally, transporter that specifically mediates the uptake of gallate. This Pseudomonas putida (Arthrobacter siderocapsulatus) protein is Gallate transporter (galT).